A 684-amino-acid polypeptide reads, in one-letter code: Macrolide export ATP-binding/permease protein MacB (684 aa).

Positions 2 to 243 (IQLYGLRKDY…RSRLANSRAE (242 aa)) constitute an ABC transporter domain. 38 to 45 (GSSGSGKT) provides a ligand contact to ATP. 5 helical membrane-spanning segments follow: residues 248 to 268 (PASAWSLPATWNAIVVAVLAL), 275 to 295 (TVLTMLGVIIGVASVISTMEL), 563 to 583 (LVIAGVSLMVGGVGIMNIMLV), 615 to 635 (VLCVVGGFIGIFAGHMWSVLV), and 644 to 664 (AMSIWAPIVAVTVAATVGIVF).

Belongs to the ABC transporter superfamily. Macrolide exporter (TC 3.A.1.122) family. In terms of assembly, homodimer.

It localises to the cell inner membrane. Its function is as follows. Non-canonical ABC transporter that contains transmembrane domains (TMD), which form a pore in the inner membrane, and an ATP-binding domain (NBD), which is responsible for energy generation. Confers resistance against macrolides. In Rhodopirellula baltica (strain DSM 10527 / NCIMB 13988 / SH1), this protein is Macrolide export ATP-binding/permease protein MacB.